The sequence spans 213 residues: Small ribosomal subunit protein uS4 (213 aa).

A disordered region spans residues 16-53 (GTDLGLKSGVKPYDVKTKKSARPPGQHGVSRNKSSEYS). Residues 44 to 53 (VSRNKSSEYS) show a composition bias toward polar residues. Residues 97–163 (SRLDNVVYRM…EKSREQLRIK (67 aa)) form the S4 RNA-binding domain.

Belongs to the universal ribosomal protein uS4 family. As to quaternary structure, part of the 30S ribosomal subunit. Contacts protein S5. The interaction surface between S4 and S5 is involved in control of translational fidelity.

Functionally, one of the primary rRNA binding proteins, it binds directly to 16S rRNA where it nucleates assembly of the body of the 30S subunit. In terms of biological role, with S5 and S12 plays an important role in translational accuracy. In Psychrobacter cryohalolentis (strain ATCC BAA-1226 / DSM 17306 / VKM B-2378 / K5), this protein is Small ribosomal subunit protein uS4.